The sequence spans 349 residues: MNVPDRKKALEAAIAYIEKQFGSGSIMSLGKHSASHEISTIKTGALSLDLALGIGGVPKGRIVEIFGPESSGKTTLATHIVANAQKMGGVAAYIDAEHALDPSYASLIGANIHDLMISQPDCGEDALSIAELLARSGAVDVIVIDSVAALVPKSELEGDIGDVHVGLQARMMSQALRKLTATLARSQTCAIFINQIREKIGVSFGNPETTTGGRALKFYSSIRIDIRRIGAIKGNESFDLGNRIKVKVAKNKLAPPFKTAEFDILFNEGISSAGCILDLAVEHNIVEKKGSWFNYQDRKLGQGREAVREELKKNKKLLEELEKRILEVTASPKTIVEEKKEELAMQPVA.

67 to 74 (GPESSGKT) is a binding site for ATP.

Belongs to the RecA family.

The protein resides in the cytoplasm. In terms of biological role, can catalyze the hydrolysis of ATP in the presence of single-stranded DNA, the ATP-dependent uptake of single-stranded DNA by duplex DNA, and the ATP-dependent hybridization of homologous single-stranded DNAs. It interacts with LexA causing its activation and leading to its autocatalytic cleavage. The protein is Protein RecA of Chlamydia abortus (strain DSM 27085 / S26/3) (Chlamydophila abortus).